Here is a 410-residue protein sequence, read N- to C-terminus: Peptidase T (410 aa).

H79 lines the Zn(2+) pocket. D81 is a catalytic residue. D142 lines the Zn(2+) pocket. E176 functions as the Proton acceptor in the catalytic mechanism. Residues E177, D199, and H381 each coordinate Zn(2+).

Belongs to the peptidase M20B family. Zn(2+) serves as cofactor.

Its subcellular location is the cytoplasm. The catalysed reaction is Release of the N-terminal residue from a tripeptide.. Its function is as follows. Cleaves the N-terminal amino acid of tripeptides. This Bacillus anthracis (strain A0248) protein is Peptidase T.